The primary structure comprises 163 residues: Crossover junction endodeoxyribonuclease RuvC (163 aa).

Catalysis depends on residues Asp-7, Glu-67, and Asp-140. 3 residues coordinate Mg(2+): Asp-7, Glu-67, and Asp-140.

The protein belongs to the RuvC family. Homodimer which binds Holliday junction (HJ) DNA. The HJ becomes 2-fold symmetrical on binding to RuvC with unstacked arms; it has a different conformation from HJ DNA in complex with RuvA. In the full resolvosome a probable DNA-RuvA(4)-RuvB(12)-RuvC(2) complex forms which resolves the HJ. Mg(2+) serves as cofactor.

It is found in the cytoplasm. The catalysed reaction is Endonucleolytic cleavage at a junction such as a reciprocal single-stranded crossover between two homologous DNA duplexes (Holliday junction).. Functionally, the RuvA-RuvB-RuvC complex processes Holliday junction (HJ) DNA during genetic recombination and DNA repair. Endonuclease that resolves HJ intermediates. Cleaves cruciform DNA by making single-stranded nicks across the HJ at symmetrical positions within the homologous arms, yielding a 5'-phosphate and a 3'-hydroxyl group; requires a central core of homology in the junction. The consensus cleavage sequence is 5'-(A/T)TT(C/G)-3'. Cleavage occurs on the 3'-side of the TT dinucleotide at the point of strand exchange. HJ branch migration catalyzed by RuvA-RuvB allows RuvC to scan DNA until it finds its consensus sequence, where it cleaves and resolves the cruciform DNA. The sequence is that of Crossover junction endodeoxyribonuclease RuvC from Petrotoga mobilis (strain DSM 10674 / SJ95).